The following is a 454-amino-acid chain: Cobyrinate a,c-diamide synthase (454 aa).

The 196-residue stretch at 247–442 (KIGIAMDSAF…IHAHWASNPN (196 aa)) folds into the GATase cobBQ-type domain. Cys329 serves as the catalytic Nucleophile.

This sequence belongs to the CobB/CbiA family. Requires Mg(2+) as cofactor.

The enzyme catalyses cob(II)yrinate + 2 L-glutamine + 2 ATP + 2 H2O = cob(II)yrinate a,c diamide + 2 L-glutamate + 2 ADP + 2 phosphate + 2 H(+). Its pathway is cofactor biosynthesis; adenosylcobalamin biosynthesis; cob(II)yrinate a,c-diamide from sirohydrochlorin (anaerobic route): step 10/10. In terms of biological role, catalyzes the ATP-dependent amidation of the two carboxylate groups at positions a and c of cobyrinate, using either L-glutamine or ammonia as the nitrogen source. The chain is Cobyrinate a,c-diamide synthase from Leptospira interrogans serogroup Icterohaemorrhagiae serovar Lai (strain 56601).